The primary structure comprises 319 residues: Phosphate acyltransferase (319 aa).

This sequence belongs to the PlsX family. As to quaternary structure, homodimer. Probably interacts with PlsY.

Its subcellular location is the cytoplasm. It carries out the reaction a fatty acyl-[ACP] + phosphate = an acyl phosphate + holo-[ACP]. It functions in the pathway lipid metabolism; phospholipid metabolism. Its function is as follows. Catalyzes the reversible formation of acyl-phosphate (acyl-PO(4)) from acyl-[acyl-carrier-protein] (acyl-ACP). This enzyme utilizes acyl-ACP as fatty acyl donor, but not acyl-CoA. The polypeptide is Phosphate acyltransferase (Chlamydia muridarum (strain MoPn / Nigg)).